A 729-amino-acid polypeptide reads, in one-letter code: Transketolase (729 aa).

Histidine 97 contacts substrate. Residues histidine 138 and 186–188 (GPL) each bind thiamine diphosphate. Aspartate 227 lines the Mg(2+) pocket. Residues glycine 228 and asparagine 257 each contribute to the thiamine diphosphate site. Mg(2+) is bound by residues asparagine 257 and isoleucine 259. Substrate is bound by residues histidine 332, arginine 423, and serine 450. Histidine 332 lines the thiamine diphosphate pocket. Glutamate 477 (proton donor) is an active-site residue. Phenylalanine 503 serves as a coordination point for thiamine diphosphate. Residues histidine 527, aspartate 535, and arginine 586 each coordinate substrate.

The protein belongs to the transketolase family. As to quaternary structure, homodimer. Requires Mg(2+) as cofactor. The cofactor is Ca(2+). Mn(2+) is required as a cofactor. Co(2+) serves as cofactor. It depends on thiamine diphosphate as a cofactor.

The enzyme catalyses D-sedoheptulose 7-phosphate + D-glyceraldehyde 3-phosphate = aldehydo-D-ribose 5-phosphate + D-xylulose 5-phosphate. Functionally, catalyzes the transfer of a two-carbon ketol group from a ketose donor to an aldose acceptor, via a covalent intermediate with the cofactor thiamine pyrophosphate. The chain is Transketolase (tkt) from Streptococcus pyogenes serotype M18 (strain MGAS8232).